Reading from the N-terminus, the 375-residue chain is Flagellar P-ring protein (375 aa).

The first 23 residues, 1-23 (MFNQSFLKYMLFGFFLFSFHAHA), serve as a signal peptide directing secretion.

The protein belongs to the FlgI family. As to quaternary structure, the basal body constitutes a major portion of the flagellar organelle and consists of four rings (L,P,S, and M) mounted on a central rod.

The protein resides in the bacterial flagellum basal body. Functionally, assembles around the rod to form the L-ring and probably protects the motor/basal body from shearing forces during rotation. This Buchnera aphidicola subsp. Baizongia pistaciae (strain Bp) protein is Flagellar P-ring protein.